A 167-amino-acid chain; its full sequence is Phospholipase A2 heteromtoxin (167 aa).

Residues W38, G40, and G42 each contribute to the Ca(2+) site. 5 disulfide bridges follow: C39-C61, C60-C99, C67-C92, C90-C127, and C132-C144. Residue H64 is part of the active site. Residue D65 coordinates Ca(2+). Residues 136 to 140 (GRSAR) constitute a propeptide that is removed on maturation.

The protein belongs to the phospholipase A2 family. Group III subfamily. As to quaternary structure, heterodimer composed of a large and a small subunits; disulfide-linked. It depends on Ca(2+) as a cofactor. As to expression, expressed by the venom gland.

Its subcellular location is the secreted. It carries out the reaction a 1,2-diacyl-sn-glycero-3-phosphocholine + H2O = a 1-acyl-sn-glycero-3-phosphocholine + a fatty acid + H(+). In terms of biological role, phospholipase toxin, which catalyzes the calcium-dependent hydrolysis of the 2-acyl groups in 3-sn-phosphoglycerides. Inhibits both skeletal (RYR1) and cardiac (RYR2) ryanodine receptors (calcium release channels). Probably blocks ryanodine receptors by generating a lipid product. The chain is Phospholipase A2 heteromtoxin from Heterometrus laoticus (Thai giant scorpion).